The primary structure comprises 330 residues: Probable deoxyhypusine synthase (330 aa).

Positions 1 to 25 are disordered; sequence MTGDDADETHENVVPGSDEDLDTPD. Lys-298 functions as the Nucleophile in the catalytic mechanism.

Belongs to the deoxyhypusine synthase family. It depends on NAD(+) as a cofactor.

The enzyme catalyses [eIF5A protein]-L-lysine + spermidine = [eIF5A protein]-deoxyhypusine + propane-1,3-diamine. Its pathway is protein modification; eIF5A hypusination. In terms of biological role, catalyzes the NAD-dependent oxidative cleavage of spermidine and the subsequent transfer of the butylamine moiety of spermidine to the epsilon-amino group of a specific lysine residue of the eIF-5A precursor protein to form the intermediate deoxyhypusine residue. The chain is Probable deoxyhypusine synthase from Halobacterium salinarum (strain ATCC 29341 / DSM 671 / R1).